A 133-amino-acid chain; its full sequence is Small ribosomal subunit protein bS6 (133 aa).

Positions 106-125 (REERVERAPRAPRPEVKAEP) are enriched in basic and acidic residues. The tract at residues 106–133 (REERVERAPRAPRPEVKAEPEAEATAEA) is disordered.

This sequence belongs to the bacterial ribosomal protein bS6 family.

Binds together with bS18 to 16S ribosomal RNA. The chain is Small ribosomal subunit protein bS6 from Psychromonas ingrahamii (strain DSM 17664 / CCUG 51855 / 37).